The chain runs to 1413 residues: MKALLDLFKQVQQEEVFDAIKIGLASPDKIRSWSFGEVKKPETINYRTFKPERDGLFCAKIFGPIKDYECLCGKYKRLKHRGVICEKCGVEVTLAKVRRERMGHIELASPVAHIWFLKSLPSRLGMVLDMTLRDIERVLYFEAYVVIEPGMTPLKARQIMTEEDYYNKVEEYGDEFRAEMGAEGVRELLRAINIDEQVETLRTELKNTGSEAKIKKYAKRLKVLEAFQRSGIKPEWMILEVLPVLPPELRPLVPLDGGRFATSDLNDLYRRVINRNNRLKRLLELKAPEIIVRNEKRMLQEAVDSLLDNGRRGKAMTGANKRPLKSLADMIKGKGGRFRQNLLGKRVDYSGRSVIVVGPTLKLHQCGLPKLMALELFKPFIFNKLEVMGVATTIKAAKKEVENQTPVVWDILEEVIREHPVMLNRAPTLHRLGIQAFEPVLIEGKAIQLHPLVCAAFNADFDGDQMAVHVPLSLEAQMEARTLMLASNNVLFPANGDPSIVPSQDIVLGLYYATREAINAKGEGLSFTGVSEVIRAYENKEVELASRVNVRITEMVRNEDTSEGAPQFVPKISLYATTVGRAILSEILPHGLPFSVLNKPLKKKEISRLINTAFRKCGLRATVVFADQLMQSGFRLATRAGISICVDDMLVPPQKETIVGDAAKKVKEYDRQYMSGLVTAQERYNNVVDIWSATSEAVGKAMMEQLSTEPVTDRDGNETRQESFNSIYMMADSGARGSAVQIRQLAGMRGLMAKPDGSIIETPITANFREGLNVLQYFISTHGARKGLADTALKTANSGYLTRRLVDVTQDLVVVEDDCGTSNGVAMKALVEGGEVVEALRDRILGRVAVADVVNPETQETLYESGTLLDETAVEEIERLGIDEVRVRTPLTCETRYGLCAACYGRDLGRGSLVNVGEAVGVIAAQSIGEPGTQLTMRTFHIGGAASRAAVASSVEAKSNGIVRFTATMRYVTNAKGEQIVISRSGEALITDDIGRERERHKIPYGATLLQLDGAAIKAGTQLATWDPMTRPIITEYGGTVKFENVEEGVTVAKQIDDVTGLSTLVVIDVKRRGSQASKSVRPQVKLLDANGEEVKIPGTEHAVQIGFQVGALITVKDGQQVQVGEVLARIPTEAQKTRDITGGLPRVAELFEARSPKDAGILAEVTGTTSFGKDTKGKQRLVITDLEGNQHEFLIAKEKQVLVHDAQVVNKGEMIVDGPADPHDILRLQGIEALSRYIVDEVQDVYRLQGVKINDKHIEVIVRQMLRRVQITDNGDTRFIPGEQVERSDMLDENDRMIAEDKRPASYDNVLLGITKASLSTDSFISAASFQETTRVLTEAAIMGKRDDLRGLKENVIVGRLIPAGTGLAFHKARKAKEMSDRERFDQIAAEEAFDFGTPSTPAEEPQHPAAE.

Residues Cys-70, Cys-72, Cys-85, and Cys-88 each contribute to the Zn(2+) site. Mg(2+) contacts are provided by Asp-460, Asp-462, and Asp-464. Zn(2+) contacts are provided by Cys-819, Cys-893, Cys-900, and Cys-903.

This sequence belongs to the RNA polymerase beta' chain family. In terms of assembly, the RNAP catalytic core consists of 2 alpha, 1 beta, 1 beta' and 1 omega subunit. When a sigma factor is associated with the core the holoenzyme is formed, which can initiate transcription. The cofactor is Mg(2+). Zn(2+) serves as cofactor.

The catalysed reaction is RNA(n) + a ribonucleoside 5'-triphosphate = RNA(n+1) + diphosphate. In terms of biological role, DNA-dependent RNA polymerase catalyzes the transcription of DNA into RNA using the four ribonucleoside triphosphates as substrates. In Burkholderia ambifaria (strain MC40-6), this protein is DNA-directed RNA polymerase subunit beta'.